A 374-amino-acid polypeptide reads, in one-letter code: Lipid-A-disaccharide synthase (374 aa).

This sequence belongs to the LpxB family.

The catalysed reaction is a lipid X + a UDP-2-N,3-O-bis[(3R)-3-hydroxyacyl]-alpha-D-glucosamine = a lipid A disaccharide + UDP + H(+). It functions in the pathway bacterial outer membrane biogenesis; LPS lipid A biosynthesis. Functionally, condensation of UDP-2,3-diacylglucosamine and 2,3-diacylglucosamine-1-phosphate to form lipid A disaccharide, a precursor of lipid A, a phosphorylated glycolipid that anchors the lipopolysaccharide to the outer membrane of the cell. In Pseudomonas fluorescens (strain ATCC BAA-477 / NRRL B-23932 / Pf-5), this protein is Lipid-A-disaccharide synthase.